Here is a 65-residue protein sequence, read N- to C-terminus: Large ribosomal subunit protein bL33c (65 aa).

It belongs to the bacterial ribosomal protein bL33 family.

Its subcellular location is the plastid. The protein resides in the chloroplast. This chain is Large ribosomal subunit protein bL33c, found in Gracilaria tenuistipitata var. liui (Red alga).